The chain runs to 892 residues: Iodate reductase subunit IdrA (892 aa).

Residues C27, C30, and C34 each coordinate [3Fe-4S] cluster. Over residues 431-442 (RGGGHQRGGLSA) the composition is skewed to gly residues. Positions 431–452 (RGGGHQRGGLSAGGNSEWLSPE) are disordered.

Belongs to the prokaryotic molybdopterin-containing oxidoreductase family. The iodate reductase (Idr) complex is composed of a molybdopterin-dependent iodate reductase (IdrA and IdrB subunits) and two associated peroxidases (IdrP1 and IdrP2). Requires [3Fe-4S] cluster as cofactor. The cofactor is Mo-bis(molybdopterin guanine dinucleotide).

It localises to the periplasm. Its function is as follows. Involved in iodate respiration. Probably catalyzes the reduction of iodate (IO(3)(-)) to hypoiodous acid (HIO) and H(2)O(2), using a reduced cytochrome c as the electron donor. The chain is Iodate reductase subunit IdrA from Pseudomonas sp. (strain SCT).